We begin with the raw amino-acid sequence, 390 residues long: Bifunctional enzyme IspD/IspF (390 aa).

The tract at residues 1–229 (MAAGRGERAG…RQDHAVFPDI (229 aa)) is 2-C-methyl-D-erythritol 4-phosphate cytidylyltransferase. The tract at residues 230 to 390 (RTGNGYDVHS…TVIYPGEVPE (161 aa)) is 2-C-methyl-D-erythritol 2,4-cyclodiphosphate synthase. A divalent metal cation contacts are provided by D236 and H238. 4-CDP-2-C-methyl-D-erythritol 2-phosphate-binding positions include 236–238 (DVH) and 262–263 (HS). H270 is a binding site for a divalent metal cation. 4-CDP-2-C-methyl-D-erythritol 2-phosphate is bound by residues 284-286 (DIG), 360-363 (TTNE), F367, and R370.

The protein in the N-terminal section; belongs to the IspD/TarI cytidylyltransferase family. IspD subfamily. It in the C-terminal section; belongs to the IspF family. Requires a divalent metal cation as cofactor.

It carries out the reaction 2-C-methyl-D-erythritol 4-phosphate + CTP + H(+) = 4-CDP-2-C-methyl-D-erythritol + diphosphate. The enzyme catalyses 4-CDP-2-C-methyl-D-erythritol 2-phosphate = 2-C-methyl-D-erythritol 2,4-cyclic diphosphate + CMP. The protein operates within isoprenoid biosynthesis; isopentenyl diphosphate biosynthesis via DXP pathway; isopentenyl diphosphate from 1-deoxy-D-xylulose 5-phosphate: step 2/6. Its pathway is isoprenoid biosynthesis; isopentenyl diphosphate biosynthesis via DXP pathway; isopentenyl diphosphate from 1-deoxy-D-xylulose 5-phosphate: step 4/6. Its function is as follows. Bifunctional enzyme that catalyzes the formation of 4-diphosphocytidyl-2-C-methyl-D-erythritol from CTP and 2-C-methyl-D-erythritol 4-phosphate (MEP) (IspD), and catalyzes the conversion of 4-diphosphocytidyl-2-C-methyl-D-erythritol 2-phosphate (CDP-ME2P) to 2-C-methyl-D-erythritol 2,4-cyclodiphosphate (ME-CPP) with a corresponding release of cytidine 5-monophosphate (CMP) (IspF). The sequence is that of Bifunctional enzyme IspD/IspF from Brucella suis biovar 1 (strain 1330).